The chain runs to 257 residues: Na(+)-translocating NADH-quinone reductase subunit C (257 aa).

A helical membrane pass occupies residues L13–L33. T224 is subject to FMN phosphoryl threonine.

Belongs to the NqrC family. In terms of assembly, composed of six subunits; NqrA, NqrB, NqrC, NqrD, NqrE and NqrF. Requires FMN as cofactor.

The protein resides in the cell inner membrane. It catalyses the reaction a ubiquinone + n Na(+)(in) + NADH + H(+) = a ubiquinol + n Na(+)(out) + NAD(+). In terms of biological role, NQR complex catalyzes the reduction of ubiquinone-1 to ubiquinol by two successive reactions, coupled with the transport of Na(+) ions from the cytoplasm to the periplasm. NqrA to NqrE are probably involved in the second step, the conversion of ubisemiquinone to ubiquinol. This chain is Na(+)-translocating NADH-quinone reductase subunit C, found in Haemophilus ducreyi (strain 35000HP / ATCC 700724).